We begin with the raw amino-acid sequence, 440 residues long: 6-phospho-alpha-glucosidase (440 aa).

Residue 4–70 (FSVVIAGGGS…PEIEFSYTTD (67 aa)) coordinates NAD(+). Substrate is bound by residues R93 and N147. C169 serves as a coordination point for Mn(2+). D170 functions as the Proton donor in the catalytic mechanism. H200 contacts Mn(2+). The active-site Proton acceptor is Y263. R283 lines the substrate pocket.

Homodimer. NAD(+) is required as a cofactor. Requires Mn(2+) as cofactor. The cofactor is Co(2+). It depends on Ni(2+) as a cofactor.

It catalyses the reaction alpha-maltose 6'-phosphate + H2O = D-glucose 6-phosphate + D-glucose. It functions in the pathway glycan biosynthesis; sucrose metabolism. In terms of biological role, is involved in the catabolism of alpha-glycosides accumulated via a phosphoenolpyruvate-dependent phosphotransferase system (PEP-PTS). Hydrolyzes a wide variety of 6-phospho-alpha-D-glucosides including maltose-6'-phosphate, isomaltose-6'-phosphate, maltitol-6-phosphate, trehalose-6-phosphate and the 6'-phosphorylated derivatives of the five linkage-isomeric alpha-D-glucosyl-D-fructoses: trehalulose-6'-phosphate, turanose-6'-phosphate, maltulose-6'-phosphate, leucrose-6'-phosphate, and palatinose-6'-phosphate. However, sucrose-6-phosphate is not a substrate for this enzyme. The chain is 6-phospho-alpha-glucosidase from Klebsiella pneumoniae.